A 236-amino-acid polypeptide reads, in one-letter code: Large ribosomal subunit protein uL1 (236 aa).

Belongs to the universal ribosomal protein uL1 family. As to quaternary structure, part of the 50S ribosomal subunit.

Functionally, binds directly to 23S rRNA. The L1 stalk is quite mobile in the ribosome, and is involved in E site tRNA release. In terms of biological role, protein L1 is also a translational repressor protein, it controls the translation of the L11 operon by binding to its mRNA. The chain is Large ribosomal subunit protein uL1 from Acidobacterium capsulatum (strain ATCC 51196 / DSM 11244 / BCRC 80197 / JCM 7670 / NBRC 15755 / NCIMB 13165 / 161).